The primary structure comprises 746 residues: NAD(P)H-quinone oxidoreductase subunit 5, chloroplastic (746 aa).

The next 16 membrane-spanning stretches (helical) occupy residues 9–29 (WIIP…LLLF), 40–60 (WTFL…YLSI), 89–109 (IDPL…LVLI), 125–145 (FAYM…SNLI), 147–167 (VYFF…FWFT), 185–205 (GDFG…SFEF), 221–241 (VNFL…IAKS), 258–278 (TPIS…FLVA), 280–300 (LLPL…IGII), 327–347 (LGYM…FHLI), 354–374 (ALLF…VGYS), 396–416 (TAFL…CFWS), 425–445 (LLFS…TAFY), 547–567 (ILFP…IGIP), 608–628 (FSVS…KPFY), and 723–743 (YLFL…FFYF).

The protein belongs to the complex I subunit 5 family. In terms of assembly, NDH is composed of at least 16 different subunits, 5 of which are encoded in the nucleus.

The protein resides in the plastid. Its subcellular location is the chloroplast thylakoid membrane. The enzyme catalyses a plastoquinone + NADH + (n+1) H(+)(in) = a plastoquinol + NAD(+) + n H(+)(out). The catalysed reaction is a plastoquinone + NADPH + (n+1) H(+)(in) = a plastoquinol + NADP(+) + n H(+)(out). In terms of biological role, NDH shuttles electrons from NAD(P)H:plastoquinone, via FMN and iron-sulfur (Fe-S) centers, to quinones in the photosynthetic chain and possibly in a chloroplast respiratory chain. The immediate electron acceptor for the enzyme in this species is believed to be plastoquinone. Couples the redox reaction to proton translocation, and thus conserves the redox energy in a proton gradient. The chain is NAD(P)H-quinone oxidoreductase subunit 5, chloroplastic (ndhF) from Barbarea verna (Land cress).